A 264-amino-acid polypeptide reads, in one-letter code: 3-methyl-2-oxobutanoate hydroxymethyltransferase (264 aa).

Residues Asp45 and Asp84 each contribute to the Mg(2+) site. 3-methyl-2-oxobutanoate is bound by residues 45–46, Asp84, and Lys112; that span reads DS. Residue Glu114 coordinates Mg(2+). Residue Glu181 is the Proton acceptor of the active site.

It belongs to the PanB family. As to quaternary structure, homodecamer; pentamer of dimers. Requires Mg(2+) as cofactor.

It localises to the cytoplasm. The catalysed reaction is 3-methyl-2-oxobutanoate + (6R)-5,10-methylene-5,6,7,8-tetrahydrofolate + H2O = 2-dehydropantoate + (6S)-5,6,7,8-tetrahydrofolate. The protein operates within cofactor biosynthesis; (R)-pantothenate biosynthesis; (R)-pantoate from 3-methyl-2-oxobutanoate: step 1/2. Its function is as follows. Catalyzes the reversible reaction in which hydroxymethyl group from 5,10-methylenetetrahydrofolate is transferred onto alpha-ketoisovalerate to form ketopantoate. This is 3-methyl-2-oxobutanoate hydroxymethyltransferase from Shewanella sp. (strain MR-4).